Consider the following 421-residue polypeptide: Synaptotagmin-12 (421 aa).

The Vesicular portion of the chain corresponds to M1–G18. Residues W19 to L39 form a helical membrane-spanning segment. Over W40–N421 the chain is Cytoplasmic. Residues S97, S99, and S214 each carry the phosphoserine modification. 2 C2 domains span residues T152–L272 and A283–H416.

It belongs to the synaptotagmin family. In terms of assembly, homodimer. Can also form heterodimers. Interacts with SYT1. In terms of processing, phosphorylation of Ser-97 is required for mossy-fiber long-term potentiation.

It is found in the cytoplasmic vesicle. The protein resides in the secretory vesicle. It localises to the synaptic vesicle membrane. Its function is as follows. Synaptic vesicle phosphoprotein that enhances spontaneous neurotransmitter release but does not effect induced neurotransmitter release. Unlike other synaptotagmins, it does not bind Ca(2+) or phospholipids. Essential for mossy-fiber long-term potentiation in the hippocampus. In Homo sapiens (Human), this protein is Synaptotagmin-12 (SYT12).